Here is a 47-residue protein sequence, read N- to C-terminus: Photosystem II reaction center protein Psb30 (47 aa).

The helical transmembrane segment at 19–39 (VIFQLLSVALIVIAGPVVIFL) threads the bilayer.

The protein belongs to the Psb30/Ycf12 family. As to quaternary structure, PSII is composed of 1 copy each of membrane proteins PsbA, PsbB, PsbC, PsbD, PsbE, PsbF, PsbH, PsbI, PsbJ, PsbK, PsbL, PsbM, PsbT, PsbX, PsbY, PsbZ, Psb30/Ycf12, peripheral proteins PsbO, CyanoQ (PsbQ), PsbU, PsbV and a large number of cofactors. It forms dimeric complexes.

It localises to the cellular thylakoid membrane. Its function is as follows. A core subunit of photosystem II (PSII), probably helps stabilize the reaction center. This chain is Photosystem II reaction center protein Psb30, found in Nostoc punctiforme (strain ATCC 29133 / PCC 73102).